Here is a 2476-residue protein sequence, read N- to C-terminus: Non-reducing polyketide synthase ausA (2476 aa).

The interval 14 to 253 is N-terminal acylcarrier protein transacylase domain (SAT); that stretch reads VLFGPKYPEV…HHSNHTQAVE (240 aa). A Ketosynthase family 3 (KS3) domain is found at 379–795; sequence AVPIAVTGMA…GSNAAIVLRE (417 aa). Catalysis depends on for beta-ketoacyl synthase activity residues Cys544, His679, and His718. The malonyl-CoA:ACP transacylase (MAT) domain stretch occupies residues 906–1210; the sequence is ICFGGQTGDT…LPTDLSGAQA (305 aa). Ser993 acts as the For acyl/malonyl transferase activity in catalysis. Positions 1277–1405 are N-terminal hotdog fold; that stretch reads QEASLVRLLR…GRVSLQAAGS (129 aa). The region spanning 1277–1584 is the PKS/mFAS DH domain; it reads QEASLVRLLR…FTGVSIQSLK (308 aa). The tract at residues 1280–1583 is product template (PT) domain; that stretch reads SLVRLLRQDG…TFTGVSIQSL (304 aa). The Proton acceptor; for dehydratase activity role is filled by His1310. Residues 1433–1584 are C-terminal hotdog fold; sequence SSSGLKRSTV…FTGVSIQSLK (152 aa). The active-site Proton donor; for dehydratase activity is Asp1491. The 75-residue stretch at 1626–1700 folds into the Carrier domain; it reads DGDLLAVQTM…GLVQRIFPGH (75 aa). Ser1660 is subject to O-(pantetheine 4'-phosphoryl)serine. The interval 1862–2095 is methyltransferase (CMeT) domain; that stretch reads QHASEHKLLH…GFNWVDWTDN (234 aa). The interval 2128–2476 is thioesterase (TE) domain; the sequence is NTVQEQTVLY…YEFLRRHVGL (349 aa). Active-site for thioesterase activity residues include Ser2251, Asp2413, and His2445.

The enzyme catalyses 3 malonyl-CoA + acetyl-CoA + 2 S-adenosyl-L-methionine = 3,5-dimethylorsellinate + 2 S-adenosyl-L-homocysteine + 3 CO2 + 4 CoA. The protein operates within secondary metabolite biosynthesis; terpenoid biosynthesis. In terms of biological role, non-reducing polyketide synthase; part of the gene cluster A that mediates the biosynthesis of austinol and dehydroaustinol, two fungal meroterpenoids. The first step of the pathway is the synthesis of 3,5-dimethylorsellinic acid by the polyketide synthase ausA. 3,5-dimethylorsellinic acid is then prenylated by the polyprenyl transferase ausN. Further epoxidation by the FAD-dependent monooxygenase ausM and cyclization by the probable terpene cyclase ausL lead to the formation of protoaustinoid A. Protoaustinoid A is then oxidized to spiro-lactone preaustinoid A3 by the combined action of the FAD-binding monooxygenases ausB and ausC, and the dioxygenase ausE. Acid-catalyzed keto-rearrangement and ring contraction of the tetraketide portion of preaustinoid A3 by ausJ lead to the formation of preaustinoid A4. The aldo-keto reductase ausK, with the help of ausH, is involved in the next step by transforming preaustinoid A4 into isoaustinone which is in turn hydroxylated by the P450 monooxygenase ausI to form austinolide. Finally, the cytochrome P450 monooxygenase ausG modifies austinolide to austinol. Austinol can be further modified to dehydroaustinol which forms a diffusible complex with diorcinol that initiates conidiation. Due to genetic rearrangements of the clusters and the subsequent loss of some enzymes, the end products of the Emericella nidulans austinoid biosynthesis clusters are austinol and dehydroaustinol, even if additional enzymes, such as the O-acetyltransferase ausQ and the cytochrome P450 monooxygenase ausR are still functional. The chain is Non-reducing polyketide synthase ausA from Emericella nidulans (strain FGSC A4 / ATCC 38163 / CBS 112.46 / NRRL 194 / M139) (Aspergillus nidulans).